The primary structure comprises 357 residues: ATP-dependent 6-phosphofructokinase 2 (357 aa).

ATP-binding positions include Gly-12, 80 to 81 (KG), and 107 to 110 (GDGS). Mg(2+) is bound at residue Asp-108. Residues 131–133 (TID), Arg-168, 175–177 (MGR), Glu-229, Arg-272, and 278–281 (HIQR) contribute to the substrate site. Asp-133 acts as the Proton acceptor in catalysis.

It belongs to the phosphofructokinase type A (PFKA) family. Mixed-substrate PFK group III subfamily. As to quaternary structure, homodimer or homotetramer. Mg(2+) serves as cofactor.

The protein resides in the cytoplasm. It carries out the reaction beta-D-fructose 6-phosphate + ATP = beta-D-fructose 1,6-bisphosphate + ADP + H(+). It functions in the pathway carbohydrate degradation; glycolysis; D-glyceraldehyde 3-phosphate and glycerone phosphate from D-glucose: step 3/4. With respect to regulation, subject to allosteric activation by ADP and other diphosphonucleosides, and inhibition by phosphoenolpyruvate. Its function is as follows. Catalyzes the phosphorylation of D-fructose 6-phosphate to fructose 1,6-bisphosphate by ATP, the first committing step of glycolysis. The chain is ATP-dependent 6-phosphofructokinase 2 from Nostoc sp. (strain PCC 7120 / SAG 25.82 / UTEX 2576).